The following is a 335-amino-acid chain: Coiled-coil domain-containing protein 68 (335 aa).

Residues 101-305 adopt a coiled-coil conformation; it reads QLLEMNKENE…KTQVALSSET (205 aa).

In terms of assembly, interacts with CEP170. As to expression, expressed in bone marrow, colon, small intestine, spleen, testis, trachea and cutaneous T-cell lymphoma (CTCL).

Its subcellular location is the cytoplasm. It localises to the cytoskeleton. The protein localises to the microtubule organizing center. It is found in the centrosome. The protein resides in the centriole. Its function is as follows. Centriolar protein required for centriole subdistal appendage assembly and microtubule anchoring in interphase cells. Together with CCDC120, cooperate with subdistal appendage components ODF2, NIN and CEP170 for hierarchical subdistal appendage assembly. This chain is Coiled-coil domain-containing protein 68 (CCDC68), found in Homo sapiens (Human).